A 386-amino-acid chain; its full sequence is Cysteine protease Amb a 11.0101 (386 aa).

Residues 1–22 form the signal peptide; it reads MEINKLVCFSFSLVLILGLVES. The T-cell epitope. MHC class II peptide able to activate CD(4+) T cells of the ragweed pollen-allergic patients indicated by significantly increased IL-2 production compared to non-allergic individuals. Not recognized by IgE of the patients allergic to ragweed pollen stretch occupies residues 6 to 20; that stretch reads LVCFSFSLVLILGLV. Positions 23–108 are cleaved as a propeptide — activation peptide; that stretch reads FHYHERELES…SKISHFQALR (86 aa). Asn127 carries N-linked (GlcNAc...) (complex) asparagine glycosylation. 3 disulfide bridges follow: Cys152–Cys193, Cys186–Cys226, and Cys283–Cys334. Residue Cys155 is part of the active site. Residues 173-186 are B-cell epitope. Binds to IgE of the patients allergic to ragweed pollen; the sequence is GKLVKFSEQQLVDC. Residues His289 and Asn310 contribute to the active site. Residues 340-377 form a disordered region; sequence SSFPIMNDPNPPKDDPNGPKDDPDAPKDPKFKTTQRLQ. A compositionally biased stretch (basic and acidic residues) spans 350–370; that stretch reads PPKDDPNGPKDDPDAPKDPKF. A propeptide spans 371-386 (removed in mature form); it reads KTTQRLQGIRTKLLEL.

Belongs to the peptidase C1 family. In terms of assembly, homodimer. Autocatalytic proteolytic cleavage of N-terminal activation peptide. Post-translationally, N-glycosylated. Glycosylation is not required for binding to IgE. As to expression, expressed in pollen (at protein and mRNA level).

With respect to regulation, activated by L-cysteine. Inhibited by cysteine protease inhibitor E64 (L-trans-epoxysuccinyl-leucylamide-(4-guanido)-butane). Inhibited by cysteine/serine protease inhibitor leupeptin. Not inhibited by serine protease inhibitors 4-(2-aminoethyl)benzenesulfonyl fluoride hydrochloride (AEBSF) and phenylmethanesulfonyl fluoride (PMSF), metallo protease inhibitor bestatin or aspartic protease inhibitor pepstatin A. Cysteine protease. Hydrolyzes casein and synthetic peptide Boc-Val-Leu-Lys-7-amino-4-methylcoumarin (Boc-VLK-AMC) in vitro. The sequence is that of Cysteine protease Amb a 11.0101 from Ambrosia artemisiifolia (Common ragweed).